The primary structure comprises 237 residues: Protein XpsM (237 aa).

The tract at residues 1-21 (MPAATWTASPSPPNWPVPMPR) is disordered. Pro residues predominate over residues 10–21 (PSPPNWPVPMPR).

This Xanthomonas campestris pv. campestris (strain ATCC 33913 / DSM 3586 / NCPPB 528 / LMG 568 / P 25) protein is Protein XpsM (xpsM).